We begin with the raw amino-acid sequence, 100 residues long: NADH-quinone oxidoreductase subunit K 2 (100 aa).

Helical transmembrane passes span 4 to 24 (LWWY…GVLI), 28 to 48 (ILVV…NFIA), and 60 to 80 (IFAI…LGIL).

It belongs to the complex I subunit 4L family. NDH-1 is composed of 14 different subunits. Subunits NuoA, H, J, K, L, M, N constitute the membrane sector of the complex.

It is found in the cell inner membrane. The enzyme catalyses a quinone + NADH + 5 H(+)(in) = a quinol + NAD(+) + 4 H(+)(out). In terms of biological role, NDH-1 shuttles electrons from NADH, via FMN and iron-sulfur (Fe-S) centers, to quinones in the respiratory chain. The immediate electron acceptor for the enzyme in this species is believed to be ubiquinone. Couples the redox reaction to proton translocation (for every two electrons transferred, four hydrogen ions are translocated across the cytoplasmic membrane), and thus conserves the redox energy in a proton gradient. This chain is NADH-quinone oxidoreductase subunit K 2, found in Rhizobium etli (strain ATCC 51251 / DSM 11541 / JCM 21823 / NBRC 15573 / CFN 42).